A 485-amino-acid polypeptide reads, in one-letter code: Glutamyl-tRNA(Gln) amidotransferase subunit A (485 aa).

Residues lysine 80 and serine 155 each act as charge relay system in the active site. Catalysis depends on serine 179, which acts as the Acyl-ester intermediate.

The protein belongs to the amidase family. GatA subfamily. In terms of assembly, heterotrimer of A, B and C subunits.

It carries out the reaction L-glutamyl-tRNA(Gln) + L-glutamine + ATP + H2O = L-glutaminyl-tRNA(Gln) + L-glutamate + ADP + phosphate + H(+). In terms of biological role, allows the formation of correctly charged Gln-tRNA(Gln) through the transamidation of misacylated Glu-tRNA(Gln) in organisms which lack glutaminyl-tRNA synthetase. The reaction takes place in the presence of glutamine and ATP through an activated gamma-phospho-Glu-tRNA(Gln). The polypeptide is Glutamyl-tRNA(Gln) amidotransferase subunit A (Endomicrobium trichonymphae).